A 316-amino-acid chain; its full sequence is Ribosomal RNA small subunit methyltransferase H (316 aa).

S-adenosyl-L-methionine contacts are provided by residues 35–37, Asp55, Phe79, Asp101, and Gln108; that span reads GGH.

The protein belongs to the methyltransferase superfamily. RsmH family.

Its subcellular location is the cytoplasm. It catalyses the reaction cytidine(1402) in 16S rRNA + S-adenosyl-L-methionine = N(4)-methylcytidine(1402) in 16S rRNA + S-adenosyl-L-homocysteine + H(+). Its function is as follows. Specifically methylates the N4 position of cytidine in position 1402 (C1402) of 16S rRNA. The protein is Ribosomal RNA small subunit methyltransferase H of Vibrio proteolyticus (Aeromonas proteolytica).